Reading from the N-terminus, the 375-residue chain is Trans-enoyl reductase BOA5 (375 aa).

The span at methionine 1–glutamate 16 shows a compositional bias: polar residues. The disordered stretch occupies residues methionine 1–proline 21. NADP(+) is bound at residue serine 42 to lysine 45. Valine 121–leucine 128 is a binding site for substrate. The interval glycine 147 to threonine 168 is disordered. NADP(+)-binding positions include serine 185–threonine 188, serine 208–asparagine 211, tyrosine 226, and leucine 273–aspartate 274. Alanine 294 to phenylalanine 298 is a substrate binding site. Valine 363 to serine 364 lines the NADP(+) pocket.

This sequence belongs to the zinc-containing alcohol dehydrogenase family. In terms of assembly, monomer.

Its pathway is polyketide biosynthesis. Its function is as follows. Trans-enoyl reductase; part of the gene cluster A that mediates the biosynthesis of botcinic acid and its botcinin derivatives, acetate-derived polyketides that contribute to virulence when combined with the sesquiterpene botrydial. Botcinic acid and its derivatives have been shown to induce chlorosis and necrosis during host plant infection, but also have antifungal activities. Two polyketide synthases, BOA6 and BOA9, are involved in the biosynthesis of botcinins. BOA6 mediates the formation of the per-methylated tetraketide core by condensation of four units of malonyl-CoA with one unit of acetyl-CoA, which would be methylated in activated methylene groups to yield a bicyclic acid intermediate that could then either be converted to botrylactone derivatives or lose the starter acetate unit through a retro-Claisen type C-C bond cleavage to yield botcinin derivatives. The second polyketide synthase, BOA9, is probably required for the biosynthesis of the tetraketide side chain of botcinins. The methyltransferase (MT) domain within BOA6 is probably responsible for the incorporation of four methyl groups. The trans-enoyl reductase BOA5 might take over the enoyl reductase function of BOA6 that misses an ER domain. The monooxygenases BOA2, BOA3 and BOA4 might be involved in further hydroxylations at C4, C5 and C8, whereas BOA7, close to BOA9, could potentially be involved in the hydroxylation at C4 in the side chain of botcinins. This chain is Trans-enoyl reductase BOA5, found in Botryotinia fuckeliana (strain B05.10) (Noble rot fungus).